A 119-amino-acid chain; its full sequence is Large ribosomal subunit protein uL18 (119 aa).

The protein belongs to the universal ribosomal protein uL18 family. As to quaternary structure, part of the 50S ribosomal subunit; part of the 5S rRNA/L5/L18/L25 subcomplex. Contacts the 5S and 23S rRNAs.

This is one of the proteins that bind and probably mediate the attachment of the 5S RNA into the large ribosomal subunit, where it forms part of the central protuberance. In Chlorobium luteolum (strain DSM 273 / BCRC 81028 / 2530) (Pelodictyon luteolum), this protein is Large ribosomal subunit protein uL18.